We begin with the raw amino-acid sequence, 860 residues long: Leucine--tRNA ligase (860 aa).

Residues 42–52 carry the 'HIGH' region motif; it reads PYPSGRLHMGH. Residues 619-623 carry the 'KMSKS' region motif; sequence KMSKS. Lys622 is a binding site for ATP.

The protein belongs to the class-I aminoacyl-tRNA synthetase family.

The protein localises to the cytoplasm. The catalysed reaction is tRNA(Leu) + L-leucine + ATP = L-leucyl-tRNA(Leu) + AMP + diphosphate. The polypeptide is Leucine--tRNA ligase (Yersinia enterocolitica serotype O:8 / biotype 1B (strain NCTC 13174 / 8081)).